Here is a 340-residue protein sequence, read N- to C-terminus: DNA-directed RNA polymerase subunit alpha (340 aa).

The segment at 1 to 233 (MIQDEIPIPV…DLFIIFLNME (233 aa)) is alpha N-terminal domain (alpha-NTD). The segment at 264–340 (AKEVAFKQIF…QLPKDQFNIS (77 aa)) is alpha C-terminal domain (alpha-CTD).

The protein belongs to the RNA polymerase alpha chain family. In plastids the minimal PEP RNA polymerase catalytic core is composed of four subunits: alpha, beta, beta', and beta''. When a (nuclear-encoded) sigma factor is associated with the core the holoenzyme is formed, which can initiate transcription.

It is found in the plastid. The protein localises to the chloroplast. The enzyme catalyses RNA(n) + a ribonucleoside 5'-triphosphate = RNA(n+1) + diphosphate. Functionally, DNA-dependent RNA polymerase catalyzes the transcription of DNA into RNA using the four ribonucleoside triphosphates as substrates. The sequence is that of DNA-directed RNA polymerase subunit alpha from Psilotum nudum (Whisk fern).